A 1484-amino-acid chain; its full sequence is DNA-directed RNA polymerase subunit beta' (1484 aa).

Zn(2+)-binding residues include Cys-67, Cys-69, Cys-82, and Cys-85. Asp-499, Asp-501, and Asp-503 together coordinate Mg(2+). The Zn(2+) site is built by Cys-867, Cys-943, Cys-950, and Cys-953.

It belongs to the RNA polymerase beta' chain family. The RNAP catalytic core consists of 2 alpha, 1 beta, 1 beta' and 1 omega subunit. When a sigma factor is associated with the core the holoenzyme is formed, which can initiate transcription. Mg(2+) is required as a cofactor. Requires Zn(2+) as cofactor.

The enzyme catalyses RNA(n) + a ribonucleoside 5'-triphosphate = RNA(n+1) + diphosphate. Its function is as follows. DNA-dependent RNA polymerase catalyzes the transcription of DNA into RNA using the four ribonucleoside triphosphates as substrates. The polypeptide is DNA-directed RNA polymerase subunit beta' (Chlorobium phaeovibrioides (strain DSM 265 / 1930) (Prosthecochloris vibrioformis (strain DSM 265))).